The chain runs to 531 residues: Cytochrome c oxidase subunit 1 (531 aa).

Residues 18-38 (ILYLIYGMVSAMVATGMSVII) traverse the membrane as a helical segment. Positions 41 and 46 each coordinate Ca(2+). 6 helical membrane-spanning segments follow: residues 59-79 (VLVT…ILIG), 103-123 (ISFW…LIET), 149-169 (AIFA…NFIV), 185-205 (PLFV…LPVL), 237-257 (LFYF…FGII), and 269-289 (IFGQ…GFLV). His64 provides a ligand contact to Fe(II)-heme a. His243 provides a ligand contact to Cu cation. Residues 243-247 (HPEVY) constitute a cross-link (1'-histidyl-3'-tyrosine (His-Tyr)). Tyr247 is an O2 binding site. 2 residues coordinate Cu cation: His292 and His293. A run of 2 helical transmembrane segments spans residues 312 to 332 (MVIA…LYGG) and 340 to 360 (MLFA…GVML). 2 residues coordinate Mg(2+): His370 and Asp371. His378 contributes to the heme a3 binding site. His380 serves as a coordination point for Fe(II)-heme a. A run of 2 helical transmembrane segments spans residues 385–405 (MGAL…MFGL) and 414–434 (VHYW…HFLG). Pro443 is a binding site for Ca(2+). The helical transmembrane segment at 458 to 478 (WGSIMSVISVLIGLYSVLVQL) threads the bilayer.

Belongs to the heme-copper respiratory oxidase family. As to quaternary structure, component of the cytochrome c oxidase (complex IV, CIV), a multisubunit enzyme composed of a catalytic core of 3 subunits and several supernumerary subunits. The complex exists as a monomer or a dimer and forms supercomplexes (SCs) in the inner mitochondrial membrane with ubiquinol-cytochrome c oxidoreductase (cytochrome b-c1 complex, complex III, CIII). The cofactor is heme. Cu cation is required as a cofactor.

The protein localises to the mitochondrion inner membrane. It carries out the reaction 4 Fe(II)-[cytochrome c] + O2 + 8 H(+)(in) = 4 Fe(III)-[cytochrome c] + 2 H2O + 4 H(+)(out). It participates in energy metabolism; oxidative phosphorylation. Its function is as follows. Component of the cytochrome c oxidase, the last enzyme in the mitochondrial electron transport chain which drives oxidative phosphorylation. The respiratory chain contains 3 multisubunit complexes succinate dehydrogenase (complex II, CII), ubiquinol-cytochrome c oxidoreductase (cytochrome b-c1 complex, complex III, CIII) and cytochrome c oxidase (complex IV, CIV), that cooperate to transfer electrons derived from NADH and succinate to molecular oxygen, creating an electrochemical gradient over the inner membrane that drives transmembrane transport and the ATP synthase. Cytochrome c oxidase is the component of the respiratory chain that catalyzes the reduction of oxygen to water. Electrons originating from reduced cytochrome c in the intermembrane space (IMS) are transferred via the dinuclear copper A center (CU(A)) of subunit 2 and heme A of subunit 1 to the active site in subunit 1, a binuclear center (BNC) formed by heme A3 and copper B (CU(B)). The BNC reduces molecular oxygen to 2 water molecules using 4 electrons from cytochrome c in the IMS and 4 protons from the mitochondrial matrix. In Candida albicans (strain SC5314 / ATCC MYA-2876) (Yeast), this protein is Cytochrome c oxidase subunit 1 (COX1).